A 263-amino-acid polypeptide reads, in one-letter code: tRNA pseudouridine synthase A (263 aa).

Catalysis depends on aspartate 73, which acts as the Nucleophile. Tyrosine 131 serves as a coordination point for substrate.

The protein belongs to the tRNA pseudouridine synthase TruA family. Homodimer.

It catalyses the reaction uridine(38/39/40) in tRNA = pseudouridine(38/39/40) in tRNA. In terms of biological role, formation of pseudouridine at positions 38, 39 and 40 in the anticodon stem and loop of transfer RNAs. This chain is tRNA pseudouridine synthase A, found in Mycoplasmoides gallisepticum (strain R(low / passage 15 / clone 2)) (Mycoplasma gallisepticum).